The sequence spans 245 residues: tRNA pseudouridine synthase A 2 (245 aa).

The Nucleophile role is filled by Asp-53. Tyr-111 is a substrate binding site.

It belongs to the tRNA pseudouridine synthase TruA family. In terms of assembly, homodimer.

It carries out the reaction uridine(38/39/40) in tRNA = pseudouridine(38/39/40) in tRNA. In terms of biological role, formation of pseudouridine at positions 38, 39 and 40 in the anticodon stem and loop of transfer RNAs. The sequence is that of tRNA pseudouridine synthase A 2 from Bacillus anthracis.